The sequence spans 151 residues: Deoxyuridine 5'-triphosphate nucleotidohydrolase (151 aa).

Residue Arg-28 coordinates Mg(2+). Residues 72 to 74, 86 to 89, Tyr-92, Gly-97, Ile-99, and Arg-115 each bind dUTP; these read PRS and GVID.

It belongs to the dUTPase family. Requires Mg(2+) as cofactor.

It catalyses the reaction dUTP + H2O = dUMP + diphosphate + H(+). Functionally, this enzyme is involved in nucleotide metabolism: it produces dUMP, the immediate precursor of thymidine nucleotides and it decreases the intracellular concentration of dUTP so that uracil cannot be incorporated into DNA. This is Deoxyuridine 5'-triphosphate nucleotidohydrolase (OPG046) from Monkeypox virus.